The following is a 538-amino-acid chain: ATP synthase subunit beta 2 (538 aa).

Positions 1 to 10 (MADPQATNGT) are enriched in polar residues. The interval 1–30 (MADPQATNGTGAACAERDASDVGDVSDVGD) is disordered. ATP is bound at residue 185 to 192 (GGAGVGKT). The segment covering 494-505 (AAAREADARREA) has biased composition (basic and acidic residues). The tract at residues 494–538 (AAAREADARREAAAAASVAGPGTTSGTTSDPASGSAEPQGARHGR) is disordered. Over residues 506–529 (AAAASVAGPGTTSGTTSDPASGSA) the composition is skewed to low complexity.

It belongs to the ATPase alpha/beta chains family. As to quaternary structure, F-type ATPases have 2 components, CF(1) - the catalytic core - and CF(0) - the membrane proton channel. CF(1) has five subunits: alpha(3), beta(3), gamma(1), delta(1), epsilon(1). CF(0) has three main subunits: a(1), b(2) and c(9-12). The alpha and beta chains form an alternating ring which encloses part of the gamma chain. CF(1) is attached to CF(0) by a central stalk formed by the gamma and epsilon chains, while a peripheral stalk is formed by the delta and b chains.

It localises to the cell inner membrane. The enzyme catalyses ATP + H2O + 4 H(+)(in) = ADP + phosphate + 5 H(+)(out). Functionally, produces ATP from ADP in the presence of a proton gradient across the membrane. The catalytic sites are hosted primarily by the beta subunits. The protein is ATP synthase subunit beta 2 of Burkholderia pseudomallei (strain K96243).